Reading from the N-terminus, the 1074-residue chain is DNA helicase B (1074 aa).

3 disordered regions span residues 1–38, 380–420, and 932–1014; these read MARQDRLRELLGPLHPYKSDDEEEDCAQEEEGEQEEEF, GAKP…HVRS, and GSCA…FDEE. Residues 20-38 show a composition bias toward acidic residues; sequence DDEEEDCAQEEEGEQEEEF. Residues 934–946 are compositionally biased toward polar residues; that stretch reads CAPSTGFASQPSS. Ser942 and Ser946 each carry phosphoserine. Thr992 is modified (phosphothreonine). A phosphoserine mark is found at Ser1015 and Ser1026. Residues 1022-1046 carry the Nuclear export signal motif; sequence VEAPSPQVSSVFQNMRLNTLTPRQL. The segment at 1040-1074 is disordered; sequence TLTPRQLFKPTDNQDTGTAGVADDANDPSNQEMEM.

The protein belongs to the RecD family. HELB subfamily. As to quaternary structure, binds to RPA1; this interaction promotes HELB recruitment to chromatin following DNA damage. Interacts with at least two subunits of the DNA polymerase alpha complex. Interacts with CDC45. Interacts with TOPB1. Post-translationally, phosphorylated at Ser-942 by CDK2 during the G1/S transition, resulting in its nuclear export into the cytoplasm. As S phase progresses, its exclusion from the nucleus promotes the activation of long-range resection.

It is found in the nucleus. The protein resides in the cytoplasm. Its subcellular location is the chromosome. The catalysed reaction is ATP + H2O = ADP + phosphate + H(+). Its function is as follows. 5'-3' DNA helicase involved in DNA damage response by acting as an inhibitor of DNA end resection. Recruitment to single-stranded DNA (ssDNA) following DNA damage leads to inhibit the nucleases catalyzing resection, such as EXO1, BLM and DNA2, possibly via the 5'-3' ssDNA translocase activity of HELB. As cells approach S phase, DNA end resection is promoted by the nuclear export of HELB following phosphorylation. Acts independently of TP53BP1. Unwinds duplex DNA with 5'-3' polarity. Has single-strand DNA-dependent ATPase and DNA helicase activities. Prefers ATP and dATP as substrates. During S phase, may facilitate cellular recovery from replication stress. The polypeptide is DNA helicase B (Mus musculus (Mouse)).